Reading from the N-terminus, the 133-residue chain is Protein msa (133 aa).

Helical transmembrane passes span 3–23 (YLIL…AIGL), 27–47 (ILAA…ILFF), 55–75 (YIFF…VHLM), and 103–123 (FGFD…IILY).

It localises to the cell membrane. Functionally, accessory element involved in the expression of sarA and several virulence factors. Modulates SarA production and/or function in a strain-dependent manner. Affects the transcription of the accessory gene regulator (agr) and genes encoding virulence factors including alpha toxin (hla) and protein A (spa). The sequence is that of Protein msa (msa) from Staphylococcus aureus (strain bovine RF122 / ET3-1).